A 65-amino-acid chain; its full sequence is MKVFSIMKISDIIKRLREDWKRIISVAKKPDKDSFNYSIRLTLLVMAVVGLIAYIVQLTTSLIIR.

The chain crosses the membrane as a helical span at residues 44–64; sequence LVMAVVGLIAYIVQLTTSLII.

It belongs to the SecE/SEC61-gamma family. Component of the Sec protein translocase complex. Heterotrimer consisting of SecY (alpha), SecG (beta) and SecE (gamma) subunits. The heterotrimers can form oligomers, although 1 heterotrimer is thought to be able to translocate proteins. Interacts with the ribosome. May interact with SecDF, and other proteins may be involved.

Its subcellular location is the cell membrane. In terms of biological role, essential subunit of the Sec protein translocation channel SecYEG. Clamps together the 2 halves of SecY. May contact the channel plug during translocation. The polypeptide is Protein translocase subunit SecE (Sulfolobus acidocaldarius (strain ATCC 33909 / DSM 639 / JCM 8929 / NBRC 15157 / NCIMB 11770)).